Here is a 1479-residue protein sequence, read N- to C-terminus: MIERGKFRSLTLVNWNGFFARTFDLDELVTTLSGGNGAGKSTTMAAFITALIPDLTLLHFRNTTEAGATSGSRDKGLHGKLRAGVCYSTLDVVNSRHQRVLVGVRLQQVAGRDRKVDIKPFTIQGLPTAIQPTQILTQIVGDRQARVLSLQELKERVEEMEGVQFKQFNSITDYHSLMFDLGVVPRRLRSASDRSKFYRLIEASLYGGISSAITRSLRDYLLPENSGVRKAFQDMEAALRENRMTLEAIRVTQSDRDLFKHLISEATSYVAADYMRHANERRIHLDGALELRRDLFSSRKQLSSEQYRHVEMARELTEQNDTEGDLETDYQAASDHLNLVQTAMRQQEKIERYNADLEELSYRLEEQNEVVEEARDQQAENEERADAAELEVDELKSQLADYQQALDVQQTRAIQYQQAQQALERARTLCQLPDLTAENADEWLDSYQAREQEATEILLMLEQKLSVADAAHGQFEQAYQLVSKIAGAVSRSEAWQVARDLLRDSSSQRYQAERVQPLRMRLSELEQRLREQQDAERLLQDFSKRNGQDYQPEELESLQQELDARIETLSSLVAEAGERRMTLRQELEQTQQRIQKLTARAPVWLAAQETLTQLSEQSGETFEDSRQVTEFMQQLLERERETTVERDDIAARKRQIEAQVDRLSQPGGSEDPRLNALAERFGGVLLSEIYDDVTLDDAPYFSALYGPSRHAIVVSDLSLIRDQLAGLEDCPEDLYLIEGDPQSFDDSVFAVDELERAVVVKVAERQWRYSRFPEVPLFGRAAREMRLEGLRDEREALAEQYATLSFDVQKTQRLHQSFSRFIGTHLAVVFDEDPEAEIRTLSSRRGELDRAMASFDGENQQQRQQYEQAKEASGQLNKLIPRISLLCDETLQDRVEEIRAELDETEESARFIQQHGVTLTKLEPLVSVLQSDPQQHEQLQEDYTQAQNAQRQAKQQAFTLTEVVQRRAHFSYADSAGMLGENAGLNDKLRHRLEQAEAERTKAREQLRQHQTQLTQYSQVQASLKSSYDAKQDMLKELLQELQDIGVRADADAEARARQRRDELHAALSTNRSRRNQLEKQITFCEAEMDSVQKKLRKLERDYHQMREQVVTAKAGWCTVMRLVKDNGVERRLHRRELAYMEGDELRSMSDKALGALRLAVADNEHLRDVLRLSEDPKRPERKIQFYIAVYQHLRERIRQDIIRTDDPVEAIEQMEIELNRLTEELMAREQMLAISSRSVANIIRKTIQREQNRIRMLNQGLQAVSFGQVKSVRLNVNVRETHTTLLNVLSEQQEMHQDLFNSNRLTFSEALAKLYQRLNPEIDMGQRTPQTIGEELLDYRNYLEMEVEVNRGADGWLRAESGALSTGEAIGTGMSILVMVVQSWEEESKRLRGKDIIPCRLLFLDEAARLDAKSIATLFELCDRLEMQLVIAAPENISPEKGTTYKLVRKVYQNNEHVHVVGLRGFGTETPETQEPAS.

An ATP-binding site is contributed by 34–41; that stretch reads GGNGAGKS. 5 coiled-coil regions span residues 337-418, 511-604, 780-810, 847-1116, and 1206-1265; these read LNLV…QYQQ, QAER…APVW, RAAR…DVQK, ELDR…AKAG, and DDPV…LQAV. A flexible hinge region spans residues 666-783; sequence PGGSEDPRLN…EVPLFGRAAR (118 aa).

Belongs to the SMC family. MukB subfamily. As to quaternary structure, homodimerization via its hinge domain. Binds to DNA via its C-terminal region. Interacts, and probably forms a ternary complex, with MukE and MukF via its C-terminal region. The complex formation is stimulated by calcium or magnesium. Interacts with tubulin-related protein FtsZ.

Its subcellular location is the cytoplasm. The protein resides in the nucleoid. Functionally, plays a central role in chromosome condensation, segregation and cell cycle progression. Functions as a homodimer, which is essential for chromosome partition. Involved in negative DNA supercoiling in vivo, and by this means organize and compact chromosomes. May achieve or facilitate chromosome segregation by condensation DNA from both sides of a centrally located replisome during cell division. This Pectobacterium atrosepticum (strain SCRI 1043 / ATCC BAA-672) (Erwinia carotovora subsp. atroseptica) protein is Chromosome partition protein MukB.